Consider the following 408-residue polypeptide: Phosphoenolpyruvate/phosphate translocator 1, chloroplastic (408 aa).

A chloroplast-targeting transit peptide spans 1 to 66 (MQSAAAVGLL…ISARRIGLVP (66 aa)). 7 helical membrane passes run 105 to 125 (TLQLGALFGLWYLFNIYFNIY), 139 to 159 (ITNVQFAVGTVIALFMWITGI), 165 to 185 (ISGAQLAAILPLAMVHTMGNL), 222 to 242 (PTPFVVLSLVPIVGGVALASL), 245 to 262 (ASFNWAGFWSAMASNVTF), 283 to 303 (ITLFSIITVMSFFLLAPVTLL), and 375 to 395 (TPVSPINSLGTGVALAGVFLY). One can recognise an EamA domain in the interval 124–241 (IYNKQVLKVF…PIVGGVALAS (118 aa)).

The protein belongs to the TPT transporter family. PPT (TC 2.A.7.9) subfamily.

Its subcellular location is the plastid. The protein localises to the chloroplast membrane. In terms of biological role, phosphoenolpyruvate/phosphate translocator that transports phosphoenolpyruvate (PEP) and dihydroxyacetone phosphate. The sequence is that of Phosphoenolpyruvate/phosphate translocator 1, chloroplastic (PPT1) from Oryza sativa subsp. japonica (Rice).